Here is a 222-residue protein sequence, read N- to C-terminus: UPF0758 protein Cag_1513 (222 aa).

Positions 100 to 222 (KIMAAGDVFE…WYSFRERGLL (123 aa)) constitute an MPN domain. H171, H173, and D184 together coordinate Zn(2+). Residues 171–184 (HNHPSGDVNPSNAD) carry the JAMM motif motif.

The protein belongs to the UPF0758 family.

The chain is UPF0758 protein Cag_1513 from Chlorobium chlorochromatii (strain CaD3).